Here is a 376-residue protein sequence, read N- to C-terminus: 23S rRNA (uracil(747)-C(5))-methyltransferase RlmC (376 aa).

[4Fe-4S] cluster contacts are provided by Cys3, Cys11, Cys14, and Cys87. S-adenosyl-L-methionine-binding residues include Gln212, Phe241, Glu262, and Asn307. The active-site Nucleophile is the Cys334.

This sequence belongs to the class I-like SAM-binding methyltransferase superfamily. RNA M5U methyltransferase family. RlmC subfamily.

The catalysed reaction is uridine(747) in 23S rRNA + S-adenosyl-L-methionine = 5-methyluridine(747) in 23S rRNA + S-adenosyl-L-homocysteine + H(+). In terms of biological role, catalyzes the formation of 5-methyl-uridine at position 747 (m5U747) in 23S rRNA. The sequence is that of 23S rRNA (uracil(747)-C(5))-methyltransferase RlmC from Yersinia pseudotuberculosis serotype I (strain IP32953).